Reading from the N-terminus, the 589-residue chain is Aspartate--tRNA(Asp/Asn) ligase (589 aa).

Residue Glu-170 participates in L-aspartate binding. The segment at 194 to 197 (QLFK) is aspartate. Arg-216 serves as a coordination point for L-aspartate. Residues 216–218 (RDE) and Gln-225 contribute to the ATP site. His-448 is a binding site for L-aspartate. Position 482 (Glu-482) interacts with ATP. Arg-489 provides a ligand contact to L-aspartate. Residue 534–537 (GWDR) participates in ATP binding. Residues 563 to 589 (PLTDAPASITAQQRKESGIDTKPKEVE) form a disordered region. Residues 575–589 (QRKESGIDTKPKEVE) are compositionally biased toward basic and acidic residues.

The protein belongs to the class-II aminoacyl-tRNA synthetase family. Type 1 subfamily. As to quaternary structure, homodimer.

The protein resides in the cytoplasm. The catalysed reaction is tRNA(Asx) + L-aspartate + ATP = L-aspartyl-tRNA(Asx) + AMP + diphosphate. Functionally, aspartyl-tRNA synthetase with relaxed tRNA specificity since it is able to aspartylate not only its cognate tRNA(Asp) but also tRNA(Asn). Reaction proceeds in two steps: L-aspartate is first activated by ATP to form Asp-AMP and then transferred to the acceptor end of tRNA(Asp/Asn). This is Aspartate--tRNA(Asp/Asn) ligase from Mycobacterium leprae (strain Br4923).